We begin with the raw amino-acid sequence, 266 residues long: Hydroxyethylthiazole kinase (266 aa).

Methionine 43 provides a ligand contact to substrate. The ATP site is built by arginine 119 and threonine 166. Glycine 193 is a substrate binding site.

Belongs to the Thz kinase family. It depends on Mg(2+) as a cofactor.

It carries out the reaction 5-(2-hydroxyethyl)-4-methylthiazole + ATP = 4-methyl-5-(2-phosphooxyethyl)-thiazole + ADP + H(+). It functions in the pathway cofactor biosynthesis; thiamine diphosphate biosynthesis; 4-methyl-5-(2-phosphoethyl)-thiazole from 5-(2-hydroxyethyl)-4-methylthiazole: step 1/1. Catalyzes the phosphorylation of the hydroxyl group of 4-methyl-5-beta-hydroxyethylthiazole (THZ). This Methanococcus vannielii (strain ATCC 35089 / DSM 1224 / JCM 13029 / OCM 148 / SB) protein is Hydroxyethylthiazole kinase.